Consider the following 333-residue polypeptide: 5-formaminoimidazole-4-carboxamide-1-(beta)-D-ribofuranosyl 5'-monophosphate synthetase (333 aa).

The 5-amino-1-(5-phospho-beta-D-ribosyl)imidazole-4-carboxamide site is built by His-9 and Ser-73. The ATP-grasp domain maps to 94 to 324 (RNLFEWEANQ…ISREIKLAIN (231 aa)). Residues 124–184 (PEDI…VPMY) and Glu-206 each bind ATP. Asn-230 contributes to the 5-amino-1-(5-phospho-beta-D-ribosyl)imidazole-4-carboxamide binding site. Positions 269 and 282 each coordinate Mg(2+).

The protein belongs to the phosphohexose mutase family. Mg(2+) serves as cofactor. It depends on Mn(2+) as a cofactor.

The enzyme catalyses 5-amino-1-(5-phospho-beta-D-ribosyl)imidazole-4-carboxamide + formate + ATP = 5-formamido-1-(5-phospho-D-ribosyl)imidazole-4-carboxamide + ADP + phosphate. It participates in purine metabolism; IMP biosynthesis via de novo pathway; 5-formamido-1-(5-phospho-D-ribosyl)imidazole-4-carboxamide from 5-amino-1-(5-phospho-D-ribosyl)imidazole-4-carboxamide (formate route): step 1/1. Catalyzes the ATP- and formate-dependent formylation of 5-aminoimidazole-4-carboxamide-1-beta-d-ribofuranosyl 5'-monophosphate (AICAR) to 5-formaminoimidazole-4-carboxamide-1-beta-d-ribofuranosyl 5'-monophosphate (FAICAR) in the absence of folates. The sequence is that of 5-formaminoimidazole-4-carboxamide-1-(beta)-D-ribofuranosyl 5'-monophosphate synthetase from Sulfurisphaera tokodaii (strain DSM 16993 / JCM 10545 / NBRC 100140 / 7) (Sulfolobus tokodaii).